Consider the following 1168-residue polypeptide: Zinc finger CCHC domain-containing protein 2 (1168 aa).

Disordered stretches follow at residues 1 to 87 (MLRM…GGHA), 209 to 242 (EGSRGSVEDEPGGDDEQDAEKDGPGPEGGGCAKL), 561 to 693 (KRSL…LGTE), and 932 to 978 (ATSA…SDST). Residues 43–66 (PPPPPPTGLPRGPPPPPPSPPRGL) are compositionally biased toward pro residues. A compositionally biased stretch (low complexity) spans 67-78 (EPPVASGPTAGA). Residues 216–227 (EDEPGGDDEQDA) show a composition bias toward acidic residues. Positions 233–242 (GPEGGGCAKL) are enriched in gly residues. The segment covering 574–588 (PQVEKEKIKKTENRL) has biased composition (basic and acidic residues). Residues 626-635 (SSESYSSPSS) are compositionally biased toward low complexity. Residues 636–655 (PRHDGRESLESEEEKDRDTD) show a composition bias toward basic and acidic residues. The segment covering 932–949 (ATSAQPASTGISPAQSTV) has biased composition (polar residues). Residues 951–965 (PAVPTHTPGPAPSPS) show a composition bias toward pro residues. A compositionally biased stretch (polar residues) spans 966 to 978 (PALTHSTAQSDST). The CCHC-type zinc finger occupies 1121-1138 (VSCYNCGVSGHYAQDCKQ).

The protein is Zinc finger CCHC domain-containing protein 2 (Zcchc2) of Rattus norvegicus (Rat).